The sequence spans 461 residues: Kynurenine 3-monooxygenase (461 aa).

Transmembrane regions (helical) follow at residues 395 to 415 (GFMN…VTFT) and 432 to 452 (ILSN…AIGI).

It belongs to the aromatic-ring hydroxylase family. KMO subfamily. Requires FAD as cofactor.

The protein localises to the mitochondrion. It is found in the membrane. It carries out the reaction L-kynurenine + NADPH + O2 + H(+) = 3-hydroxy-L-kynurenine + NADP(+) + H2O. It participates in cofactor biosynthesis; NAD(+) biosynthesis; quinolinate from L-kynurenine: step 1/3. In terms of biological role, catalyzes the hydroxylation of L-kynurenine (L-Kyn) to form 3-hydroxy-L-kynurenine (L-3OHKyn). Required for synthesis of quinolinic acid. The protein is Kynurenine 3-monooxygenase of Caenorhabditis briggsae.